The following is a 968-amino-acid chain: RNA polymerase-associated protein RapA (968 aa).

Residues D164 to N334 enclose the Helicase ATP-binding domain. Position 177–184 (D177–T184) interacts with ATP. A DEAH box motif is present at residues D280–H283. The 173-residue stretch at R490–G662 folds into the Helicase C-terminal domain.

It belongs to the SNF2/RAD54 helicase family. RapA subfamily. As to quaternary structure, interacts with the RNAP. Has a higher affinity for the core RNAP than for the holoenzyme. Its ATPase activity is stimulated by binding to RNAP.

Functionally, transcription regulator that activates transcription by stimulating RNA polymerase (RNAP) recycling in case of stress conditions such as supercoiled DNA or high salt concentrations. Probably acts by releasing the RNAP, when it is trapped or immobilized on tightly supercoiled DNA. Does not activate transcription on linear DNA. Probably not involved in DNA repair. The protein is RNA polymerase-associated protein RapA of Shigella flexneri serotype 5b (strain 8401).